Consider the following 119-residue polypeptide: Acidic phospholipase A2 natratoxin (119 aa).

7 cysteine pairs are disulfide-bonded: Cys11-Cys71, Cys26-Cys118, Cys28-Cys44, Cys43-Cys99, Cys50-Cys92, Cys60-Cys85, and Cys78-Cys90. Residues Tyr27, Gly29, and Gly31 each coordinate Ca(2+). His47 is a catalytic residue. Residue Asp48 coordinates Ca(2+). The active site involves Asp93.

The protein belongs to the phospholipase A2 family. Group I subfamily. D49 sub-subfamily. It depends on Ca(2+) as a cofactor. As to expression, expressed by the venom gland.

Its subcellular location is the secreted. It catalyses the reaction a 1,2-diacyl-sn-glycero-3-phosphocholine + H2O = a 1-acyl-sn-glycero-3-phosphocholine + a fatty acid + H(+). Snake venom phospholipase A2 (PLA2) that has an effectively inhibitory effect on A-type K(+) currents (Kv/KCN) in acutely dissociated rat dorsal root ganglion (DRG) neurons. This inhibitory effect is independent of its enzymatic activity. PLA2 catalyzes the calcium-dependent hydrolysis of the 2-acyl groups in 3-sn-phosphoglycerides. In Naja atra (Chinese cobra), this protein is Acidic phospholipase A2 natratoxin.